The chain runs to 180 residues: Orotate phosphoribosyltransferase (180 aa).

5-phospho-alpha-D-ribose 1-diphosphate contacts are provided by residues Arg-95, Lys-96, Lys-99, and 121–129 (EDVTTTGGS). Positions 125 and 153 each coordinate orotate.

Belongs to the purine/pyrimidine phosphoribosyltransferase family. PyrE subfamily. Homodimer. The cofactor is Mg(2+).

The catalysed reaction is orotidine 5'-phosphate + diphosphate = orotate + 5-phospho-alpha-D-ribose 1-diphosphate. It functions in the pathway pyrimidine metabolism; UMP biosynthesis via de novo pathway; UMP from orotate: step 1/2. In terms of biological role, catalyzes the transfer of a ribosyl phosphate group from 5-phosphoribose 1-diphosphate to orotate, leading to the formation of orotidine monophosphate (OMP). The protein is Orotate phosphoribosyltransferase of Methanothermobacter thermautotrophicus (strain ATCC 29096 / DSM 1053 / JCM 10044 / NBRC 100330 / Delta H) (Methanobacterium thermoautotrophicum).